The primary structure comprises 123 residues: Immunoglobulin lambda variable 5-39 (123 aa).

The N-terminal stretch at 1 to 19 is a signal peptide; it reads MAWTPLLLLLLSHCTGSLS. The tract at residues 20–44 is framework-1; the sequence is QPVLTQPTSLSASPGASARFTCTLR. Positions 21-123 constitute an Ig-like domain; it reads PVLTQPTSLS…YCAIWYSSTS (103 aa). Cys-41 and Cys-115 are oxidised to a cystine. The complementarity-determining-1 stretch occupies residues 45-53; it reads SGINVGTYR. The segment at 54-70 is framework-2; the sequence is IYWYQQKPGSLPRYLLR. Residues 71–77 form a complementarity-determining-2 region; that stretch reads YKSDSDK. Residues 78–115 form a framework-3 region; that stretch reads QQGSGVPSRFSGSKDASTNAGLLLISGLQSEDEADYYC. The tract at residues 116 to 123 is complementarity-determining-3; it reads AIWYSSTS.

As to quaternary structure, immunoglobulins are composed of two identical heavy chains and two identical light chains; disulfide-linked.

Its subcellular location is the secreted. It is found in the cell membrane. In terms of biological role, v region of the variable domain of immunoglobulin light chains that participates in the antigen recognition. Immunoglobulins, also known as antibodies, are membrane-bound or secreted glycoproteins produced by B lymphocytes. In the recognition phase of humoral immunity, the membrane-bound immunoglobulins serve as receptors which, upon binding of a specific antigen, trigger the clonal expansion and differentiation of B lymphocytes into immunoglobulins-secreting plasma cells. Secreted immunoglobulins mediate the effector phase of humoral immunity, which results in the elimination of bound antigens. The antigen binding site is formed by the variable domain of one heavy chain, together with that of its associated light chain. Thus, each immunoglobulin has two antigen binding sites with remarkable affinity for a particular antigen. The variable domains are assembled by a process called V-(D)-J rearrangement and can then be subjected to somatic hypermutations which, after exposure to antigen and selection, allow affinity maturation for a particular antigen. The polypeptide is Immunoglobulin lambda variable 5-39 (Homo sapiens (Human)).